A 59-amino-acid polypeptide reads, in one-letter code: Large ribosomal subunit protein uL30 (59 aa).

The protein belongs to the universal ribosomal protein uL30 family. In terms of assembly, part of the 50S ribosomal subunit.

This chain is Large ribosomal subunit protein uL30, found in Alteromonas mediterranea (strain DSM 17117 / CIP 110805 / LMG 28347 / Deep ecotype).